The primary structure comprises 810 residues: Phenylalanine--tRNA ligase beta subunit (810 aa).

The 116-residue stretch at 39–154 (APPTEKIVVG…EGTPVGQDIR (116 aa)) folds into the tRNA-binding domain. One can recognise a B5 domain in the interval 405–480 (PQRAPVSMRA…RIYGFEKIPA (76 aa)). Mg(2+) is bound by residues aspartate 458, aspartate 464, glutamate 467, and glutamate 468. Positions 707–809 (SKFPPVRRDI…MARVYGARLR (103 aa)) constitute an FDX-ACB domain.

Belongs to the phenylalanyl-tRNA synthetase beta subunit family. Type 1 subfamily. In terms of assembly, tetramer of two alpha and two beta subunits. It depends on Mg(2+) as a cofactor.

It is found in the cytoplasm. It carries out the reaction tRNA(Phe) + L-phenylalanine + ATP = L-phenylalanyl-tRNA(Phe) + AMP + diphosphate + H(+). This Burkholderia pseudomallei (strain 1710b) protein is Phenylalanine--tRNA ligase beta subunit.